The sequence spans 415 residues: Adipocyte plasma membrane-associated protein (415 aa).

A disordered region spans residues 1–29 (MSEADGLRQRRPLRPQVVTDDGQVPEVKE). Ser2 bears the N-acetylserine mark. Residues 2 to 39 (SEADGLRQRRPLRPQVVTDDGQVPEVKEGSSFSGRVFR) lie on the Cytoplasmic side of the membrane. Residue Thr19 is modified to Phosphothreonine. A helical; Signal-anchor for type II membrane protein membrane pass occupies residues 40–60 (MTFLMLAVSLAIPLLGAMMLL). Residues 61–415 (ESPIDPQSFS…FICRLSLQSI (355 aa)) lie on the Extracellular side of the membrane. Residue Asn159 is glycosylated (N-linked (GlcNAc...) asparagine).

It belongs to the strictosidine synthase family. In terms of processing, glycosylated in vitro. In terms of tissue distribution, strongly expressed in adipose tissue. Highly expressed in liver, heart, and kidney. Expressed at intermediate level in brain and lung. Weakly expressed in spleen, skeletal muscle and testis.

The protein resides in the membrane. Its function is as follows. Exhibits strong arylesterase activity with beta-naphthyl acetate and phenyl acetate. May play a role in adipocyte differentiation. The sequence is that of Adipocyte plasma membrane-associated protein (Apmap) from Mus musculus (Mouse).